The following is a 219-amino-acid chain: RING-H2 finger protein ATL78 (219 aa).

A helical transmembrane segment spans residues 57 to 77 (VMVLSVLLCALVCSLGLNSII). Residues 131–173 (CAICLSEFVAEERVKLLPTCHHGFHVRCIDKWLSSHSSCPTCR) form an RING-type; atypical zinc finger.

The protein belongs to the RING-type zinc finger family. ATL subfamily.

The protein resides in the membrane. The catalysed reaction is S-ubiquitinyl-[E2 ubiquitin-conjugating enzyme]-L-cysteine + [acceptor protein]-L-lysine = [E2 ubiquitin-conjugating enzyme]-L-cysteine + N(6)-ubiquitinyl-[acceptor protein]-L-lysine.. It functions in the pathway protein modification; protein ubiquitination. This chain is RING-H2 finger protein ATL78 (ATL78), found in Arabidopsis thaliana (Mouse-ear cress).